A 53-amino-acid polypeptide reads, in one-letter code: MAKKPWKKKYGYGIRPCQRCGHVGPGLIRKYGLNLCRQCFREIAHKLGFKKLD.

Positions 17, 20, 36, and 39 each coordinate Zn(2+).

The protein belongs to the universal ribosomal protein uS14 family. Zinc-binding uS14 subfamily. Part of the 30S ribosomal subunit. It depends on Zn(2+) as a cofactor.

Binds 16S rRNA, required for the assembly of 30S particles. This Methanocaldococcus jannaschii (strain ATCC 43067 / DSM 2661 / JAL-1 / JCM 10045 / NBRC 100440) (Methanococcus jannaschii) protein is Small ribosomal subunit protein uS14.